The primary structure comprises 337 residues: DNA-directed RNA polymerase subunit alpha (337 aa).

The segment at 1–233 (MVREKVTVST…DLFIPFLHME (233 aa)) is alpha N-terminal domain (alpha-NTD). Residues 265 to 337 (KKIALKSIFI…FVIDLAKNKF (73 aa)) are alpha C-terminal domain (alpha-CTD).

This sequence belongs to the RNA polymerase alpha chain family. In plastids the minimal PEP RNA polymerase catalytic core is composed of four subunits: alpha, beta, beta', and beta''. When a (nuclear-encoded) sigma factor is associated with the core the holoenzyme is formed, which can initiate transcription.

The protein resides in the plastid. It is found in the chloroplast. The enzyme catalyses RNA(n) + a ribonucleoside 5'-triphosphate = RNA(n+1) + diphosphate. DNA-dependent RNA polymerase catalyzes the transcription of DNA into RNA using the four ribonucleoside triphosphates as substrates. This Nicotiana sylvestris (Wood tobacco) protein is DNA-directed RNA polymerase subunit alpha.